Here is a 644-residue protein sequence, read N- to C-terminus: Chaperone protein DnaK (644 aa).

Position 199 is a phosphothreonine; by autocatalysis (threonine 199). A disordered region spans residues 602–644 (IYAKKSSEGQTAQGQTQSQESTKPAEEGVVDAEFEEVKEEDKK). Over residues 609–623 (EGQTAQGQTQSQEST) the composition is skewed to polar residues. The span at 629–644 (GVVDAEFEEVKEEDKK) shows a compositional bias: acidic residues.

It belongs to the heat shock protein 70 family.

Acts as a chaperone. The protein is Chaperone protein DnaK of Legionella pneumophila (strain Lens).